A 344-amino-acid polypeptide reads, in one-letter code: tRNA N6-adenosine threonylcarbamoyltransferase (344 aa).

Fe cation is bound by residues His112 and His116. Substrate-binding positions include Leu134–Gly138, Asp167, Gly180, and Asn280. Position 308 (Asp308) interacts with Fe cation.

Belongs to the KAE1 / TsaD family. Fe(2+) is required as a cofactor.

It localises to the cytoplasm. The catalysed reaction is L-threonylcarbamoyladenylate + adenosine(37) in tRNA = N(6)-L-threonylcarbamoyladenosine(37) in tRNA + AMP + H(+). Functionally, required for the formation of a threonylcarbamoyl group on adenosine at position 37 (t(6)A37) in tRNAs that read codons beginning with adenine. Is involved in the transfer of the threonylcarbamoyl moiety of threonylcarbamoyl-AMP (TC-AMP) to the N6 group of A37, together with TsaE and TsaB. TsaD likely plays a direct catalytic role in this reaction. The sequence is that of tRNA N6-adenosine threonylcarbamoyltransferase from Rickettsia rickettsii (strain Iowa).